The primary structure comprises 61 residues: Short neurotoxin 2 (61 aa).

Disulfide bonds link cysteine 3-cysteine 23, cysteine 17-cysteine 40, cysteine 42-cysteine 53, and cysteine 54-cysteine 59.

It belongs to the three-finger toxin family. Short-chain subfamily. Type I alpha-neurotoxin sub-subfamily. In terms of tissue distribution, expressed by the venom gland.

The protein resides in the secreted. Its function is as follows. Binds to muscle nicotinic acetylcholine receptor (nAChR) and inhibit acetylcholine from binding to the receptor, thereby impairing neuromuscular transmission. In Naja haje haje (Egyptian cobra), this protein is Short neurotoxin 2.